Consider the following 193-residue polypeptide: Acyl-homoserine-lactone synthase (193 aa).

It belongs to the autoinducer synthase family.

It catalyses the reaction a fatty acyl-[ACP] + S-adenosyl-L-methionine = an N-acyl-L-homoserine lactone + S-methyl-5'-thioadenosine + holo-[ACP] + H(+). Required for the synthesis of N-(3-oxodecanoyl)-L-homoserine lactone (ODHL), an autoinducer molecule which binds to VanR. The chain is Acyl-homoserine-lactone synthase (vanI) from Vibrio anguillarum (Listonella anguillarum).